Consider the following 696-residue polypeptide: Chitin synthase regulator SKT5 (696 aa).

2 disordered regions span residues 37-67 and 90-145; these read GQDF…SANQ and QEED…IKKR. The segment covering 41-53 has biased composition (basic and acidic residues); it reads SDNKENRENRDNE. Residues 104–126 are compositionally biased toward low complexity; sequence LNNSNNTSLSSLGSTPTNSPSPG. The segment covering 129–139 has biased composition (polar residues); sequence RQTNSSTSLTK. A Phosphoserine modification is found at Ser148. 7 Sel1-like repeats span residues 271 to 306, 307 to 342, 343 to 382, 386 to 423, 424 to 460, 461 to 498, and 499 to 534; these read SDAQ…KHGH, IESA…SRNH, PSAM…ARAN, AAAP…SLGH, VPSA…LKGD, SVAM…NAGL, and PKAQ…GNED. Ser561 and Ser563 each carry phosphoserine. Thr564 is subject to Phosphothreonine. 3 stretches are compositionally biased toward polar residues: residues 576–593, 605–634, and 651–661; these read SNVG…TFFT, LQIN…SSAK, and VSLSNMGSSNM. Residues 576 to 696 form a disordered region; the sequence is SNVGSNSRVS…GKKKKDCVIM (121 aa). Positions 662 to 675 are enriched in basic and acidic residues; it reads IRKDFPAVKTESKK. Residues 680-696 show a composition bias toward basic residues; it reads KNKKDKQGKKKKDCVIM. At Cys693 the chain carries Cysteine methyl ester. Cys693 is lipidated: S-farnesyl cysteine. Positions 694–696 are cleaved as a propeptide — removed in mature form; sequence VIM.

The protein belongs to the SKT5 family. May interact with CHS3 and seems to be an adapter (along with BNI4) to link CHS3 to septins. Post-translationally, farnesylation is required for chitin synthase CHS3 activity but is not required for SKT5 membrane association.

Its subcellular location is the cell membrane. In terms of biological role, activator of the chitin synthase CHS3 which polymerizes chitin, a structural polymer of the fungal cell wall. This chain is Chitin synthase regulator SKT5, found in Saccharomyces cerevisiae (strain ATCC 204508 / S288c) (Baker's yeast).